Here is a 179-residue protein sequence, read N- to C-terminus: Large ribosomal subunit protein uL5 (179 aa).

Belongs to the universal ribosomal protein uL5 family. As to quaternary structure, part of the 50S ribosomal subunit; part of the 5S rRNA/L5/L18/L25 subcomplex. Contacts the 5S rRNA and the P site tRNA. Forms a bridge to the 30S subunit in the 70S ribosome.

Its function is as follows. This is one of the proteins that bind and probably mediate the attachment of the 5S RNA into the large ribosomal subunit, where it forms part of the central protuberance. In the 70S ribosome it contacts protein S13 of the 30S subunit (bridge B1b), connecting the 2 subunits; this bridge is implicated in subunit movement. Contacts the P site tRNA; the 5S rRNA and some of its associated proteins might help stabilize positioning of ribosome-bound tRNAs. The protein is Large ribosomal subunit protein uL5 of Maridesulfovibrio salexigens (strain ATCC 14822 / DSM 2638 / NCIMB 8403 / VKM B-1763) (Desulfovibrio salexigens).